A 287-amino-acid polypeptide reads, in one-letter code: S-methyl-5'-thioadenosine phosphorylase (287 aa).

Residues threonine 13 and 55–56 (RH) contribute to the phosphate site. Substrate is bound at residue methionine 186. Threonine 187 contacts phosphate. 210-212 (DYD) contributes to the substrate binding site.

This sequence belongs to the PNP/MTAP phosphorylase family. MTAP subfamily. Homohexamer. Dimer of a homotrimer.

The catalysed reaction is S-methyl-5'-thioadenosine + phosphate = 5-(methylsulfanyl)-alpha-D-ribose 1-phosphate + adenine. Its pathway is amino-acid biosynthesis; L-methionine biosynthesis via salvage pathway; S-methyl-5-thio-alpha-D-ribose 1-phosphate from S-methyl-5'-thioadenosine (phosphorylase route): step 1/1. Catalyzes the reversible phosphorylation of S-methyl-5'-thioadenosine (MTA) to adenine and 5-methylthioribose-1-phosphate. Involved in the breakdown of MTA, a major by-product of polyamine biosynthesis. Responsible for the first step in the methionine salvage pathway after MTA has been generated from S-adenosylmethionine. Has broad substrate specificity with 6-aminopurine nucleosides as preferred substrates. This chain is S-methyl-5'-thioadenosine phosphorylase, found in Leptospira interrogans serogroup Icterohaemorrhagiae serovar Lai (strain 56601).